The following is a 344-amino-acid chain: Phosphate acyltransferase (344 aa).

The protein belongs to the PlsX family. In terms of assembly, homodimer. Probably interacts with PlsY.

The protein localises to the cytoplasm. It catalyses the reaction a fatty acyl-[ACP] + phosphate = an acyl phosphate + holo-[ACP]. It functions in the pathway lipid metabolism; phospholipid metabolism. Its function is as follows. Catalyzes the reversible formation of acyl-phosphate (acyl-PO(4)) from acyl-[acyl-carrier-protein] (acyl-ACP). This enzyme utilizes acyl-ACP as fatty acyl donor, but not acyl-CoA. In Erwinia tasmaniensis (strain DSM 17950 / CFBP 7177 / CIP 109463 / NCPPB 4357 / Et1/99), this protein is Phosphate acyltransferase.